Here is a 66-residue protein sequence, read N- to C-terminus: U1-theraphotoxin-Cg1a 2 (66 aa).

Residues 1–21 (MKTSALFVIFGLVLLFCNSFA) form the signal peptide. Residues 22-29 (AELEMTGR) constitute a propeptide that is removed on maturation. 3 disulfides stabilise this stretch: Cys31–Cys46, Cys38–Cys51, and Cys45–Cys58. Residue Pro63 is modified to Proline amide.

It belongs to the neurotoxin 10 (Hwtx-1) family. 46 (Jztx-7/10/12) subfamily. Expressed by the venom gland.

It is found in the secreted. Its function is as follows. Probable ion channel inhibitor. The protein is U1-theraphotoxin-Cg1a 2 of Chilobrachys guangxiensis (Chinese earth tiger tarantula).